The primary structure comprises 383 residues: Acetylornithine deacetylase (383 aa).

His80 provides a ligand contact to Zn(2+). The active site involves Asp82. Asp112 provides a ligand contact to Zn(2+). Residue Glu144 is part of the active site. Positions 145, 169, and 355 each coordinate Zn(2+).

Belongs to the peptidase M20A family. ArgE subfamily. As to quaternary structure, homodimer. It depends on Zn(2+) as a cofactor. Co(2+) is required as a cofactor. The cofactor is glutathione.

The protein localises to the cytoplasm. It catalyses the reaction N(2)-acetyl-L-ornithine + H2O = L-ornithine + acetate. It participates in amino-acid biosynthesis; L-arginine biosynthesis; L-ornithine from N(2)-acetyl-L-ornithine (linear): step 1/1. Functionally, catalyzes the hydrolysis of the amide bond of N(2)-acetylated L-amino acids. Cleaves the acetyl group from N-acetyl-L-ornithine to form L-ornithine, an intermediate in L-arginine biosynthesis pathway, and a branchpoint in the synthesis of polyamines. In Escherichia coli O127:H6 (strain E2348/69 / EPEC), this protein is Acetylornithine deacetylase.